The primary structure comprises 227 residues: Lipoprotein-releasing system ATP-binding protein LolD (227 aa).

One can recognise an ABC transporter domain in the interval 6 to 227 (LKIEGLRKTY…HLEDGVLVER (222 aa)). 43–50 (APSGAGKS) provides a ligand contact to ATP.

This sequence belongs to the ABC transporter superfamily. Lipoprotein translocase (TC 3.A.1.125) family. As to quaternary structure, the complex is composed of two ATP-binding proteins (LolD) and two transmembrane proteins (LolC and LolE).

The protein localises to the cell inner membrane. In terms of biological role, part of the ABC transporter complex LolCDE involved in the translocation of mature outer membrane-directed lipoproteins, from the inner membrane to the periplasmic chaperone, LolA. Responsible for the formation of the LolA-lipoprotein complex in an ATP-dependent manner. This chain is Lipoprotein-releasing system ATP-binding protein LolD, found in Ruegeria sp. (strain TM1040) (Silicibacter sp.).